The primary structure comprises 408 residues: Peptidase T (408 aa).

A Zn(2+)-binding site is contributed by histidine 78. Aspartate 80 is a catalytic residue. Residue aspartate 141 participates in Zn(2+) binding. Glutamate 175 acts as the Proton acceptor in catalysis. Residues glutamate 176, aspartate 198, and histidine 380 each coordinate Zn(2+).

It belongs to the peptidase M20B family. Requires Zn(2+) as cofactor.

The protein localises to the cytoplasm. The enzyme catalyses Release of the N-terminal residue from a tripeptide.. In terms of biological role, cleaves the N-terminal amino acid of tripeptides. The sequence is that of Peptidase T from Clostridium botulinum (strain Kyoto / Type A2).